The primary structure comprises 254 residues: Pyridoxine 5'-phosphate synthase (254 aa).

3-amino-2-oxopropyl phosphate is bound at residue asparagine 12. A 1-deoxy-D-xylulose 5-phosphate-binding site is contributed by 14–15 (DH). Arginine 23 provides a ligand contact to 3-amino-2-oxopropyl phosphate. The active-site Proton acceptor is histidine 48. Arginine 50 and histidine 55 together coordinate 1-deoxy-D-xylulose 5-phosphate. Glutamate 75 functions as the Proton acceptor in the catalytic mechanism. Threonine 105 contacts 1-deoxy-D-xylulose 5-phosphate. The active-site Proton donor is histidine 199. Residues glycine 200 and 221–222 (GF) contribute to the 3-amino-2-oxopropyl phosphate site.

Belongs to the PNP synthase family. Homooctamer; tetramer of dimers.

The protein localises to the cytoplasm. The catalysed reaction is 3-amino-2-oxopropyl phosphate + 1-deoxy-D-xylulose 5-phosphate = pyridoxine 5'-phosphate + phosphate + 2 H2O + H(+). The protein operates within cofactor biosynthesis; pyridoxine 5'-phosphate biosynthesis; pyridoxine 5'-phosphate from D-erythrose 4-phosphate: step 5/5. Its function is as follows. Catalyzes the complicated ring closure reaction between the two acyclic compounds 1-deoxy-D-xylulose-5-phosphate (DXP) and 3-amino-2-oxopropyl phosphate (1-amino-acetone-3-phosphate or AAP) to form pyridoxine 5'-phosphate (PNP) and inorganic phosphate. This is Pyridoxine 5'-phosphate synthase from Rhodopseudomonas palustris (strain ATCC BAA-98 / CGA009).